The sequence spans 556 residues: Arginine--tRNA ligase (556 aa).

Residues 132–142 (ANPTGDLHLGH) carry the 'HIGH' region motif.

This sequence belongs to the class-I aminoacyl-tRNA synthetase family. As to quaternary structure, monomer.

It is found in the cytoplasm. It catalyses the reaction tRNA(Arg) + L-arginine + ATP = L-arginyl-tRNA(Arg) + AMP + diphosphate. In Listeria monocytogenes serotype 4b (strain F2365), this protein is Arginine--tRNA ligase.